The chain runs to 76 residues: Translational regulator CsrA (76 aa).

This sequence belongs to the CsrA/RsmA family. In terms of assembly, homodimer; the beta-strands of each monomer intercalate to form a hydrophobic core, while the alpha-helices form wings that extend away from the core.

Its subcellular location is the cytoplasm. A translational regulator that binds mRNA to regulate translation initiation and/or mRNA stability. Usually binds in the 5'-UTR at or near the Shine-Dalgarno sequence preventing ribosome-binding, thus repressing translation. Its main target seems to be the major flagellin gene, while its function is anatagonized by FliW. This is Translational regulator CsrA from Wolinella succinogenes (strain ATCC 29543 / DSM 1740 / CCUG 13145 / JCM 31913 / LMG 7466 / NCTC 11488 / FDC 602W) (Vibrio succinogenes).